Here is a 596-residue protein sequence, read N- to C-terminus: Deuterosome assembly protein 1 (596 aa).

Coiled coils occupy residues 8–68, 130–180, and 227–284; these read IARN…NHEI, CELQ…FQKE, and IENL…DLLR. The span at 297–306 shows a compositional bias: polar residues; the sequence is TANLANQKTA. The disordered stretch occupies residues 297-316; that stretch reads TANLANQKTAQGEEASFQVT. A coiled-coil region spans residues 337-402; it reads SEKYQAENDL…LKGAQNRQTS (66 aa). The interval 447 to 467 is disordered; the sequence is DKPQKHRSFHGENNSLKPTNY. Residues 457–467 show a composition bias toward polar residues; the sequence is GENNSLKPTNY.

Belongs to the CEP63 family.

It localises to the cytoplasm. Its function is as follows. Key structural component of the deuterosome, a structure that promotes de novo centriole amplification in multiciliated cells. Deuterosome-mediated centriole amplification occurs in terminally differentiated multiciliated cells and can generate more than 100 centrioles. Probably sufficient for the specification and formation of the deuterosome inner core. The polypeptide is Deuterosome assembly protein 1 (Xenopus tropicalis (Western clawed frog)).